A 101-amino-acid chain; its full sequence is Large ribosomal subunit protein uL24 (101 aa).

It belongs to the universal ribosomal protein uL24 family. In terms of assembly, part of the 50S ribosomal subunit.

One of two assembly initiator proteins, it binds directly to the 5'-end of the 23S rRNA, where it nucleates assembly of the 50S subunit. Functionally, one of the proteins that surrounds the polypeptide exit tunnel on the outside of the subunit. In Borrelia recurrentis (strain A1), this protein is Large ribosomal subunit protein uL24.